Here is a 363-residue protein sequence, read N- to C-terminus: Phosphatidylinositol transfer protein sfh-5 (363 aa).

Residues 1–84 form a disordered region; sequence MSTQPSDSAE…SPADIKDSVS (84 aa). Over residues 36–46 the composition is skewed to basic and acidic residues; that stretch reads DAAKHAEEEPK. The segment covering 64-76 has biased composition (low complexity); the sequence is KPAAAPAQEADSP. Residues 180–354 enclose the CRAL-TRIO domain; sequence AGDEPAVDEP…EYGGKGADLK (175 aa). Positions 200, 220, 253, 255, and 289 each coordinate heme.

The protein belongs to the SFH5 family. It depends on heme b as a cofactor.

It localises to the cytoplasm. Its subcellular location is the endoplasmic reticulum membrane. The protein resides in the microsome membrane. It carries out the reaction a 1,2-diacyl-sn-glycero-3-phospho-(1D-myo-inositol)(in) = a 1,2-diacyl-sn-glycero-3-phospho-(1D-myo-inositol)(out). Its function is as follows. Non-classical phosphatidylinositol (PtdIns) transfer protein (PITP), which exhibits PtdIns-binding/transfer activity in the absence of detectable PtdCho-binding/transfer activity. Regulates PtdIns(4,5)P2 homeostasis at the plasma membrane. Heme-binding protein that may play a role in organic oxidant-induced stress responses. This Neurospora crassa (strain ATCC 24698 / 74-OR23-1A / CBS 708.71 / DSM 1257 / FGSC 987) protein is Phosphatidylinositol transfer protein sfh-5 (sfh-5).